The sequence spans 459 residues: MIFYNSLSGKKEEFKPIEPNKIKMYVCGITVYDDCHIGHARTNIAFDVINRYFKYRGFDVTFVRNITDIDDKIIKRANENGETTDKLVERTIKSMHDAFDKLNILRPTKEPRATQTIPEMIAMIETLVEKGFAYQGTNGDVFYRVAKFADYGKLSKQNLEALEQGSRVDVVEEKENPMDFVLWKMAKEGEPAWDSPWGAGRPGWHIECSAMSKKLLGDTFDIHAGGSDLRFPHHENEIAQSEACNECTFANYWLHSGMVKVNAEKMSKSLNNFFTINEVIEEYHPEVIRYFLASTVYRSEINYSKENLDNARASVERLFNALRDIEPVEVNLPDDASEYEEKFIKAMDNDFNTPEALAVLFSLAKEINTLKTVNKYKASGYAFLLRKLCDVLGILFTDIEEYFKQGDGIDVSEIEKLIAERTQAKKDKNYARADEIRNDLQNQGIILEDSATGTTWKKG.

Cysteine 27 lines the Zn(2+) pocket. A 'HIGH' region motif is present at residues 29–39 (ITVYDDCHIGH). Zn(2+) contacts are provided by cysteine 208, histidine 233, and glutamate 237. A 'KMSKS' region motif is present at residues 265–269 (KMSKS). Lysine 268 contacts ATP.

Belongs to the class-I aminoacyl-tRNA synthetase family. As to quaternary structure, monomer. It depends on Zn(2+) as a cofactor.

The protein resides in the cytoplasm. The catalysed reaction is tRNA(Cys) + L-cysteine + ATP = L-cysteinyl-tRNA(Cys) + AMP + diphosphate. This is Cysteine--tRNA ligase from Francisella philomiragia subsp. philomiragia (strain ATCC 25017 / CCUG 19701 / FSC 153 / O#319-036).